The following is a 630-amino-acid chain: Biosynthetic arginine decarboxylase (630 aa).

Position 99 is an N6-(pyridoxal phosphate)lysine (Lys-99). 281-291 contacts substrate; sequence VDIGGGLGVDY.

This sequence belongs to the Orn/Lys/Arg decarboxylase class-II family. SpeA subfamily. It depends on Mg(2+) as a cofactor. Pyridoxal 5'-phosphate is required as a cofactor.

It catalyses the reaction L-arginine + H(+) = agmatine + CO2. It participates in amine and polyamine biosynthesis; agmatine biosynthesis; agmatine from L-arginine: step 1/1. Functionally, catalyzes the biosynthesis of agmatine from arginine. The protein is Biosynthetic arginine decarboxylase of Phocaeicola vulgatus (strain ATCC 8482 / DSM 1447 / JCM 5826 / CCUG 4940 / NBRC 14291 / NCTC 11154) (Bacteroides vulgatus).